We begin with the raw amino-acid sequence, 235 residues long: MCSSKMPCSPSASSLCAASPPNCCHPSCCQTTCCRTTSCSHSCSVSSCCRPQCCHSVCCQPTCCRPSCCQTTCCRTTCCHPSCCVSSCCRPQCCHSVCFQPTCCHPSCCISSSCCPSCCESSCCCPCCCLRPVCGRVSCHVTCYHPTCVISTCPHPLCCASPPLPLPFPSPPVPLPFFLSLALPSPPRPSPPLLSPVLIPSPSPSPSLPSLSPPLPSPPLPSPHFPSVNPKSMLQ.

A 16 X 5 AA repeats of C-C-[GIKRQVHEML]-[SPTRV]-[STVQRCP] region spans residues 1 to 132 (MCSSKMPCSP…CCCPCCCLRP (132 aa)). Tandem repeats lie at residues 23–27 (CCHPS), 28–32 (CCQTT), 33–37 (CCRTT), 48–52 (CCRPQ), 53–57 (CCHSV), 58–62 (CCQPT), 63–67 (CCRPS), 68–72 (CCQTT), 78–82 (CCHPS), 83–87 (CCVSS), 88–92 (CCRPQ), 93–97 (CCHSV), 103–107 (CCHPS), 108–112 (CCISS), 118–122 (CCESS), and 128–132 (CCLRP). Residues 203–224 (SPSPSLPSLSPPLPSPPLPSPH) show a composition bias toward pro residues. The interval 203–235 (SPSPSLPSLSPPLPSPPLPSPHFPSVNPKSMLQ) is disordered.

The protein belongs to the KRTAP type 4 family. Interacts with hair keratins.

In terms of biological role, in the hair cortex, hair keratin intermediate filaments are embedded in an interfilamentous matrix, consisting of hair keratin-associated proteins (KRTAP), which are essential for the formation of a rigid and resistant hair shaft through their extensive disulfide bond cross-linking with abundant cysteine residues of hair keratins. The matrix proteins include the high-sulfur and high-glycine-tyrosine keratins. In Homo sapiens (Human), this protein is Keratin-associated protein 4-16.